An 81-amino-acid chain; its full sequence is LYR motif-containing protein At3g19508 (81 aa).

Belongs to the complex I LYR family. LYRM9 subfamily.

The sequence is that of LYR motif-containing protein At3g19508 from Arabidopsis thaliana (Mouse-ear cress).